A 2341-amino-acid chain; its full sequence is Pecanex-like protein 1 (2341 aa).

A run of 2 helical transmembrane segments spans residues A28–Y50 and M57–L74. The tract at residues F98–R163 is disordered. An N-linked (GlcNAc...) asparagine glycan is attached at N109. The segment covering S143–R163 has biased composition (polar residues). N-linked (GlcNAc...) asparagine glycosylation occurs at N215. Disordered regions lie at residues H270 to P294, D311 to E331, and D344 to R689. The segment covering H272 to G282 has biased composition (basic residues). Composition is skewed to polar residues over residues K320–E331 and I347–S356. Residue N348 is glycosylated (N-linked (GlcNAc...) asparagine). Over residues S370–G388 the composition is skewed to low complexity. N394 carries N-linked (GlcNAc...) asparagine glycosylation. Positions N394 to Q404 are enriched in polar residues. Basic and acidic residues-rich tracts occupy residues K430–A455, H465–N478, and S527–P544. Residues A554 to A569 are compositionally biased toward basic residues. Over residues Q605 to S635 the composition is skewed to low complexity. An N-linked (GlcNAc...) asparagine glycan is attached at N702. Residues Q756–R834 are disordered. Residues L814–Q832 are compositionally biased toward low complexity. N852 and N863 each carry an N-linked (GlcNAc...) asparagine glycan. A run of 3 helical transmembrane segments spans residues I1003 to I1025, I1032 to L1049, and I1067 to S1089. An N-linked (GlcNAc...) asparagine glycan is attached at N1091. A helical membrane pass occupies residues F1110–L1132. The N-linked (GlcNAc...) asparagine glycan is linked to N1155. 4 helical membrane-spanning segments follow: residues L1160 to Y1182, I1194 to S1213, L1266 to L1288, and V1295 to P1312. 5 N-linked (GlcNAc...) asparagine glycosylation sites follow: N1579, N1720, N1982, N2062, and N2072. Disordered regions lie at residues N2062 to R2120 and G2217 to H2237. Polar residues-rich tracts occupy residues P2069–I2078, Y2096–V2114, and G2217–S2236. N-linked (GlcNAc...) asparagine glycans are attached at residues N2234 and N2260.

It belongs to the pecanex family.

It is found in the membrane. This chain is Pecanex-like protein 1, found in Homo sapiens (Human).